The primary structure comprises 132 residues: Small ribosomal subunit protein uS9 (132 aa).

Belongs to the universal ribosomal protein uS9 family.

In Thermoplasma volcanium (strain ATCC 51530 / DSM 4299 / JCM 9571 / NBRC 15438 / GSS1), this protein is Small ribosomal subunit protein uS9 (rps9).